The sequence spans 478 residues: Noelin-3 (478 aa).

The signal sequence occupies residues 1–23 (MSPPLLKLGAVLSTMAMISNWMS). Asparagine 33, asparagine 95, asparagine 179, asparagine 299, and asparagine 465 each carry an N-linked (GlcNAc...) asparagine glycan. Residues 77-217 (CSRDAKSRQL…TRLRDCMKKL (141 aa)) are a coiled coil. Positions 218–470 (TCGKLMKITG…QVLFNVTLFH (253 aa)) constitute an Olfactomedin-like domain. Cysteines 219 and 401 form a disulfide.

Peripherally associated with AMPAR complex. AMPAR complex consists of an inner core made of 4 pore-forming GluA/GRIA proteins (GRIA1, GRIA2, GRIA3 and GRIA4) and 4 major auxiliary subunits arranged in a twofold symmetry. One of the two pairs of distinct binding sites is occupied either by CNIH2, CNIH3 or CACNG2, CACNG3. The other harbors CACNG2, CACNG3, CACNG4, CACNG8 or GSG1L. This inner core of AMPAR complex is complemented by outer core constituents binding directly to the GluA/GRIA proteins at sites distinct from the interaction sites of the inner core constituents. Outer core constituents include at least PRRT1, PRRT2, CKAMP44/SHISA9, FRRS1L and NRN1. The proteins of the inner and outer core serve as a platform for other, more peripherally associated AMPAR constituents, including OLFM3. Alone or in combination, these auxiliary subunits control the gating and pharmacology of the AMPAR complex and profoundly impact their biogenesis and protein processing. Homodimer. Interacts with MYOC. Interacts with OLFM2. In terms of tissue distribution, in the eye, expressed in trabecular meshwork and neural retina; in non-ocular tissues, expressed in brain and lung.

The protein localises to the secreted. It is found in the synapse. This Homo sapiens (Human) protein is Noelin-3 (OLFM3).